Consider the following 1007-residue polypeptide: Kinesin-like protein KIN-7D, chloroplastic (1007 aa).

A chloroplast-targeting transit peptide spans Met-1–Ser-53. The span at Met-1 to Ser-55 shows a compositional bias: low complexity. The interval Met-1 to Ala-79 is disordered. One can recognise a Kinesin motor domain in the interval Asn-83–Ile-402. Gly-163–Thr-170 is an ATP binding site. Residues Glu-403–Ser-495 adopt a coiled-coil conformation. The interval Ile-579–Pro-607 is disordered. Coiled coils occupy residues Asn-687 to Ile-716, Ala-754 to Ala-791, and Ser-836 to Ser-907. A disordered region spans residues Glu-901 to Tyr-941. A compositionally biased stretch (basic and acidic residues) spans Thr-920–Tyr-941. The stretch at Glu-942–Met-982 forms a coiled coil.

It belongs to the TRAFAC class myosin-kinesin ATPase superfamily. Kinesin family. KIN-7 subfamily. In terms of assembly, binds microtubules. Homodimer. Mg(2+) is required as a cofactor.

It is found in the plastid. It localises to the chloroplast. Its function is as follows. Probable minus end-directed motor protein with a microtubule-enhanced ATPase activity. Binds ATP/ADP in vitro. Retains total enzymatic activity even after the removal of the ADP bound in the active site. The protein is Kinesin-like protein KIN-7D, chloroplastic of Oryza sativa subsp. japonica (Rice).